Reading from the N-terminus, the 451-residue chain is NADH-quinone oxidoreductase subunit H (451 aa).

A run of 9 helical transmembrane segments spans residues Leu30–Ile50, Ala98–Ile118, Leu138–Leu158, Ala176–Tyr196, Trp213–Thr233, Leu262–Phe282, Trp302–Leu322, Gln336–Ile356, and Val368–Val388.

Belongs to the complex I subunit 1 family. NDH-1 is composed of 14 different subunits. Subunits NuoA, H, J, K, L, M, N constitute the membrane sector of the complex.

Its subcellular location is the cell membrane. It catalyses the reaction a quinone + NADH + 5 H(+)(in) = a quinol + NAD(+) + 4 H(+)(out). Its function is as follows. NDH-1 shuttles electrons from NADH, via FMN and iron-sulfur (Fe-S) centers, to quinones in the respiratory chain. The immediate electron acceptor for the enzyme in this species is believed to be ubiquinone. Couples the redox reaction to proton translocation (for every two electrons transferred, four hydrogen ions are translocated across the cytoplasmic membrane), and thus conserves the redox energy in a proton gradient. This subunit may bind ubiquinone. This Acidothermus cellulolyticus (strain ATCC 43068 / DSM 8971 / 11B) protein is NADH-quinone oxidoreductase subunit H.